The following is a 180-amino-acid chain: Transcriptional repressor NrdR (180 aa).

A zinc finger spans residues 3 to 34 (CPRCSKQEIRVLESRSAEGGQSVRRRRECMSC). The ATP-cone domain occupies 49-139 (IMVIKRDGSR…VYRQFQGIKD (91 aa)). A disordered region spans residues 155 to 180 (LERLLQDSSASDSESSGSPDLVGEYS). Residues 160–174 (QDSSASDSESSGSPD) show a composition bias toward low complexity.

Belongs to the NrdR family. The cofactor is Zn(2+).

Negatively regulates transcription of bacterial ribonucleotide reductase nrd genes and operons by binding to NrdR-boxes. The chain is Transcriptional repressor NrdR from Synechococcus sp. (strain JA-2-3B'a(2-13)) (Cyanobacteria bacterium Yellowstone B-Prime).